Reading from the N-terminus, the 430-residue chain is Synaptotagmin-11 (430 aa).

Residues Met1 to Pro15 lie on the Vesicular side of the membrane. The chain crosses the membrane as a helical span at residues Val16–Val36. At Trp37 to Tyr430 the chain is on the cytoplasmic side. Positions Arg132–Asp154 are disordered. Ser133 bears the Phosphoserine mark. Over residues Pro140 to Ser150 the composition is skewed to low complexity. C2 domains lie at Met156–Arg278 and Ser290–His425. Ca(2+) contacts are provided by Asp249, Ser252, and Asp255.

The protein belongs to the synaptotagmin family. Homodimer. Can also form heterodimers. Interacts with PRKN. Interacts (via C2 2 domain) with AGO2 and SND1; the interaction with SND1 is direct. Interacts with KIF1A; the interaction increases in presence of calcium. The cofactor is Ca(2+). In terms of processing, ubiquitinated, at least by PRKN, and targeted to the proteasome complex for degradation. Ubiquitination is inhibited by ATP13A2. In terms of tissue distribution, highly expressed in brain and at lower levels in other tissues.

Its subcellular location is the cytoplasmic vesicle membrane. The protein resides in the perikaryon. It is found in the golgi apparatus. The protein localises to the trans-Golgi network membrane. It localises to the recycling endosome membrane. Its subcellular location is the lysosome membrane. The protein resides in the cytoplasmic vesicle. It is found in the phagosome. The protein localises to the cell projection. It localises to the axon. Its subcellular location is the dendrite. The protein resides in the postsynaptic density. It is found in the clathrin-coated vesicle membrane. In terms of biological role, synaptotagmin family member involved in vesicular and membrane trafficking which does not bind Ca(2+). Inhibits clathrin-mediated and bulk endocytosis in neurons, functions to ensure precision in vesicle retrieval. Plays an important role in dopamine transmission by regulating endocytosis and the vesicle-recycling process. Essential component of a neuronal vesicular trafficking pathway that differs from the synaptic vesicle trafficking pathway but is crucial for development and synaptic plasticity. In macrophages and microglia, inhibits the conventional cytokine secretion, of at least IL6 and TNF, and phagocytosis. In astrocytes, regulates lysosome exocytosis, mechanism required for the repair of injured astrocyte cell membrane. Required for the ATP13A2-mediated regulation of the autophagy-lysosome pathway. The chain is Synaptotagmin-11 from Rattus norvegicus (Rat).